The chain runs to 464 residues: Protein FAM90A12 (464 aa).

Disordered regions lie at residues methionine 1–leucine 42, proline 70–alanine 389, and alanine 411–proline 437. Composition is skewed to basic and acidic residues over residues glycine 74 to alanine 89 and asparagine 97 to arginine 114. The span at leucine 180–leucine 197 shows a compositional bias: low complexity.

The protein belongs to the FAM90 family.

The sequence is that of Protein FAM90A12 from Homo sapiens (Human).